The primary structure comprises 269 residues: Phosphatidylglycerol--prolipoprotein diacylglyceryl transferase (269 aa).

The next 7 helical transmembrane spans lie at 10–30 (IAVS…LIGF), 56–76 (AIFY…ILFY), 91–111 (IWEG…AMFF), 126–146 (FLAP…FIGG), 172–192 (PSQL…LWFF), 200–220 (YCVS…VEFV), and 237–257 (EGQL…MAGL). Position 139 (R139) interacts with a 1,2-diacyl-sn-glycero-3-phospho-(1'-sn-glycerol).

This sequence belongs to the Lgt family.

Its subcellular location is the cell inner membrane. It catalyses the reaction L-cysteinyl-[prolipoprotein] + a 1,2-diacyl-sn-glycero-3-phospho-(1'-sn-glycerol) = an S-1,2-diacyl-sn-glyceryl-L-cysteinyl-[prolipoprotein] + sn-glycerol 1-phosphate + H(+). The protein operates within protein modification; lipoprotein biosynthesis (diacylglyceryl transfer). In terms of biological role, catalyzes the transfer of the diacylglyceryl group from phosphatidylglycerol to the sulfhydryl group of the N-terminal cysteine of a prolipoprotein, the first step in the formation of mature lipoproteins. The chain is Phosphatidylglycerol--prolipoprotein diacylglyceryl transferase from Marinomonas sp. (strain MWYL1).